A 274-amino-acid polypeptide reads, in one-letter code: Tryptophan synthase alpha chain (274 aa).

Residues Glu49 and Asp60 each act as proton acceptor in the active site.

Belongs to the TrpA family. In terms of assembly, tetramer of two alpha and two beta chains.

The enzyme catalyses (1S,2R)-1-C-(indol-3-yl)glycerol 3-phosphate + L-serine = D-glyceraldehyde 3-phosphate + L-tryptophan + H2O. Its pathway is amino-acid biosynthesis; L-tryptophan biosynthesis; L-tryptophan from chorismate: step 5/5. The alpha subunit is responsible for the aldol cleavage of indoleglycerol phosphate to indole and glyceraldehyde 3-phosphate. The polypeptide is Tryptophan synthase alpha chain (Alkalilimnicola ehrlichii (strain ATCC BAA-1101 / DSM 17681 / MLHE-1)).